Reading from the N-terminus, the 394-residue chain is GDSL esterase/lipase At1g31550 (394 aa).

Positions 1–27 are cleaved as a signal peptide; it reads MASLDSHVLMKLGSLFLSTLFVSIVSS. Residue Ser-43 is the Nucleophile of the active site. 3 N-linked (GlcNAc...) asparagine glycosylation sites follow: Asn-138, Asn-290, and Asn-322. Catalysis depends on residues Asp-345 and His-348.

The protein belongs to the 'GDSL' lipolytic enzyme family.

The protein resides in the secreted. The sequence is that of GDSL esterase/lipase At1g31550 from Arabidopsis thaliana (Mouse-ear cress).